Here is a 214-residue protein sequence, read N- to C-terminus: Small ribosomal subunit protein uS5 (214 aa).

In terms of domain architecture, S5 DRBM spans 54–117 (LRYDIVDIGI…RDAKMRIIPV (64 aa)).

It belongs to the universal ribosomal protein uS5 family. In terms of assembly, part of the 30S ribosomal subunit. Contacts protein S4.

In terms of biological role, with S4 and S12 plays an important role in translational accuracy. This chain is Small ribosomal subunit protein uS5, found in Sulfolobus acidocaldarius (strain ATCC 33909 / DSM 639 / JCM 8929 / NBRC 15157 / NCIMB 11770).